The chain runs to 429 residues: 5-methylthioadenosine/S-adenosylhomocysteine deaminase (429 aa).

Positions 65 and 67 each coordinate Zn(2+). Substrate contacts are provided by Glu94 and His182. His209 provides a ligand contact to Zn(2+). Substrate is bound by residues Glu212 and Asp297. Residue Asp297 coordinates Zn(2+).

Belongs to the metallo-dependent hydrolases superfamily. MTA/SAH deaminase family. The cofactor is Zn(2+).

It carries out the reaction S-adenosyl-L-homocysteine + H2O + H(+) = S-inosyl-L-homocysteine + NH4(+). The catalysed reaction is S-methyl-5'-thioadenosine + H2O + H(+) = S-methyl-5'-thioinosine + NH4(+). Its function is as follows. Catalyzes the deamination of 5-methylthioadenosine and S-adenosyl-L-homocysteine into 5-methylthioinosine and S-inosyl-L-homocysteine, respectively. Is also able to deaminate adenosine. This Clostridium tetani (strain Massachusetts / E88) protein is 5-methylthioadenosine/S-adenosylhomocysteine deaminase.